Reading from the N-terminus, the 317-residue chain is Putative HTH-type transcriptional regulatory protein Mlab_0160 (317 aa).

The HTH cro/C1-type domain occupies 132-189 (LRTLREEQAMSLGDLAHALGVSRRTISKYEGGMGTTLEMAMRLEEFFNDDIVMPIDLL). The H-T-H motif DNA-binding region spans 143–162 (LGDLAHALGVSRRTISKYEG). The disordered stretch occupies residues 199–219 (VPASLASGHNPESDAQPKRPE). Residues 209 to 219 (PESDAQPKRPE) are compositionally biased toward basic and acidic residues.

The chain is Putative HTH-type transcriptional regulatory protein Mlab_0160 from Methanocorpusculum labreanum (strain ATCC 43576 / DSM 4855 / Z).